Here is a 632-residue protein sequence, read N- to C-terminus: Chaperone protein HtpG (632 aa).

An a; substrate-binding region spans residues Met1–Arg339. A b region spans residues Glu340 to Arg559. Residues Met560–Ala632 form a c region.

The protein belongs to the heat shock protein 90 family. In terms of assembly, homodimer.

The protein resides in the cytoplasm. Its function is as follows. Molecular chaperone. Has ATPase activity. In Burkholderia lata (strain ATCC 17760 / DSM 23089 / LMG 22485 / NCIMB 9086 / R18194 / 383), this protein is Chaperone protein HtpG.